The primary structure comprises 619 residues: TBC domain-containing protein C1952.17c (619 aa).

A Rab-GAP TBC domain is found at 34–387 (PDEYSLRAKA…RLWDSIIADQ (354 aa)).

It localises to the cytoplasm. May act as a GTPase-activating protein for Rab family protein(s). The sequence is that of TBC domain-containing protein C1952.17c from Schizosaccharomyces pombe (strain 972 / ATCC 24843) (Fission yeast).